A 257-amino-acid polypeptide reads, in one-letter code: tRNA pseudouridine synthase A (257 aa).

The active-site Nucleophile is the Asp52. A substrate-binding site is contributed by Tyr111.

The protein belongs to the tRNA pseudouridine synthase TruA family. Homodimer.

The enzyme catalyses uridine(38/39/40) in tRNA = pseudouridine(38/39/40) in tRNA. Its function is as follows. Formation of pseudouridine at positions 38, 39 and 40 in the anticodon stem and loop of transfer RNAs. This chain is tRNA pseudouridine synthase A, found in Cereibacter sphaeroides (strain ATCC 17025 / ATH 2.4.3) (Rhodobacter sphaeroides).